Here is a 198-residue protein sequence, read N- to C-terminus: Autophagy-related protein 16 (198 aa).

Residues 24–177 (ELVQTCSQMA…NKELVDRWMK (154 aa)) adopt a coiled-coil conformation.

Belongs to the ATG16 family. Homodimer. Part of the ATG5-ATG12/ATG16 complex. Several units of each may be present in this complex. Interacts directly with ATG12.

The protein resides in the preautophagosomal structure membrane. Stabilizes the ATG5-ATG12 conjugate. The ATG5-ATG12/ATG16 complex is required for efficient promotion of ATG8-conjugation to phosphatidylethanolamine and ATG8 localization to the pre-autophagosomal structure (PAS). Also recruits ATG3 to the PAS. Involved in endoplasmic reticulum-specific autophagic process and is essential for the survival of cells subjected to severe ER stress. Autophagy is required for proper vegetative growth, asexual/sexual reproduction, and full virulence. Autophagy is particularly involved in the biosynthesis of deoxynivalenol (DON), an important virulence determinant. The protein is Autophagy-related protein 16 of Gibberella zeae (strain ATCC MYA-4620 / CBS 123657 / FGSC 9075 / NRRL 31084 / PH-1) (Wheat head blight fungus).